The sequence spans 180 residues: Insulin-like growth factor 2 (180 aa).

The first 24 residues, 1–24 (MGIPMGKSMLVLLTFLAFASCCIA), serve as a signal peptide directing secretion. A b region spans residues 25–52 (AYRPSETLCGGELVDTLQFVCGDRGFYF). Cystine bridges form between Cys33–Cys71, Cys45–Cys84, and Cys70–Cys75. The c stretch occupies residues 53–64 (SRPASRVSRRSR). Positions 65–85 (GIVEECCFRSCDLALLETYCA) are a. Residues 86-91 (TPAKSE) are d. Residues 92 to 180 (RDVSTPPTVL…APPEMASNRK (89 aa)) constitute a propeptide, e peptide. O-linked (GalNAc...) threonine glycans are attached at residues Thr96, Thr99, and Thr163. Positions 161–180 (LPTQDPAHGGAPPEMASNRK) are disordered.

Belongs to the insulin family. Interacts with MYORG; this interaction is required for IGF2 secretion. Interacts with integrins ITGAV:ITGB3 and ITGA6:ITGB4; integrin-binding is required for IGF2 signaling. Interacts with IGFBP2. Post-translationally, O-glycosylated with core 1 or possibly core 8 glycans. Thr-96 is a minor glycosylation site compared to Thr-99. In terms of processing, proteolytically processed by PCSK4, proIGF2 is cleaved at Arg-128 and Arg-92 to generate big-IGF2 and mature IGF2. As to expression, expressed in heart, placenta, lung, liver, muscle, kidney, tongue, limb, eye and pancreas.

It is found in the secreted. Its function is as follows. The insulin-like growth factors possess growth-promoting activity. Major fetal growth hormone in mammals. Plays a key role in regulating fetoplacental development. IGF2 is influenced by placental lactogen. Also involved in tissue differentiation. In adults, involved in glucose metabolism in adipose tissue, skeletal muscle and liver. Acts as a ligand for integrin which is required for IGF2 signaling. Positively regulates myogenic transcription factor MYOD1 function by facilitating the recruitment of transcriptional coactivators, thereby controlling muscle terminal differentiation. Inhibits myoblast differentiation and modulates metabolism via increasing the mitochondrial respiration rate. Preptin undergoes glucose-mediated co-secretion with insulin, and acts as a physiological amplifier of glucose-mediated insulin secretion. Exhibits osteogenic properties by increasing osteoblast mitogenic activity through phosphoactivation of MAPK1 and MAPK3. The polypeptide is Insulin-like growth factor 2 (Homo sapiens (Human)).